A 411-amino-acid chain; its full sequence is Argininosuccinate lyase (411 aa).

Belongs to the lyase 1 family. Argininosuccinate lyase subfamily.

The protein localises to the cytoplasm. It catalyses the reaction 2-(N(omega)-L-arginino)succinate = fumarate + L-arginine. Its pathway is amino-acid biosynthesis; L-arginine biosynthesis; L-arginine from L-ornithine and carbamoyl phosphate: step 3/3. This Legionella pneumophila (strain Lens) protein is Argininosuccinate lyase.